The sequence spans 559 residues: Peptidyl-prolyl isomerase cwc27 (559 aa).

One can recognise a PPIase cyclophilin-type domain in the interval 11-184; sequence PTASATLHTT…YPVKVVSCEV (174 aa). Disordered stretches follow at residues 201-395, 413-449, and 518-559; these read ATAP…GFSS, ESADAKSGPHGKTSISASDTTKYTSQAKSNTEPEDEE, and PRER…REKP. Positions 261 to 273 are enriched in basic and acidic residues; the sequence is APKKTSPEAEQQT. A compositionally biased stretch (pro residues) spans 305 to 319; the sequence is LPDPESPARSPPQSP. 2 stretches are compositionally biased toward polar residues: residues 384–394 and 425–442; these read GSSTNGVTGFS and TSISASDTTKYTSQAKSN.

Belongs to the cyclophilin-type PPIase family. CWC27 subfamily. Associated with the spliceosome.

It is found in the cytoplasm. Its subcellular location is the nucleus. The catalysed reaction is [protein]-peptidylproline (omega=180) = [protein]-peptidylproline (omega=0). In terms of biological role, PPIases accelerate the folding of proteins. It catalyzes the cis-trans isomerization of proline imidic peptide bonds in oligopeptides. Involved in pre-mRNA splicing. In Aspergillus fumigatus (strain ATCC MYA-4609 / CBS 101355 / FGSC A1100 / Af293) (Neosartorya fumigata), this protein is Peptidyl-prolyl isomerase cwc27 (cwc27).